We begin with the raw amino-acid sequence, 317 residues long: tRNA uridine(34) hydroxylase (317 aa).

Positions 123–217 constitute a Rhodanese domain; sequence EDDDTIVIDA…YGKDPETKGE (95 aa). C177 serves as the catalytic Cysteine persulfide intermediate.

It belongs to the TrhO family.

It catalyses the reaction uridine(34) in tRNA + AH2 + O2 = 5-hydroxyuridine(34) in tRNA + A + H2O. Catalyzes oxygen-dependent 5-hydroxyuridine (ho5U) modification at position 34 in tRNAs. This is tRNA uridine(34) hydroxylase from Staphylococcus carnosus (strain TM300).